A 185-amino-acid polypeptide reads, in one-letter code: Large ribosomal subunit protein uL5 (185 aa).

The protein belongs to the universal ribosomal protein uL5 family. In terms of assembly, part of the 50S ribosomal subunit; part of the 5S rRNA/L5/L18/L25 subcomplex. Contacts the 5S rRNA and the P site tRNA. Forms a bridge to the 30S subunit in the 70S ribosome.

Functionally, this is one of the proteins that bind and probably mediate the attachment of the 5S RNA into the large ribosomal subunit, where it forms part of the central protuberance. In the 70S ribosome it contacts protein S13 of the 30S subunit (bridge B1b), connecting the 2 subunits; this bridge is implicated in subunit movement. Contacts the P site tRNA; the 5S rRNA and some of its associated proteins might help stabilize positioning of ribosome-bound tRNAs. The sequence is that of Large ribosomal subunit protein uL5 from Streptomyces griseus subsp. griseus (strain JCM 4626 / CBS 651.72 / NBRC 13350 / KCC S-0626 / ISP 5235).